The primary structure comprises 487 residues: mRNA cleavage and polyadenylation factor CLP1 (487 aa).

Residues E19, K59, and 134–139 (NSGKTT) each bind ATP.

The protein belongs to the Clp1 family. Clp1 subfamily. As to quaternary structure, component of a pre-mRNA cleavage factor complex. Interacts directly with PCF11.

It localises to the nucleus. Functionally, required for endonucleolytic cleavage during polyadenylation-dependent pre-mRNA 3'-end formation. The protein is mRNA cleavage and polyadenylation factor CLP1 of Laccaria bicolor (strain S238N-H82 / ATCC MYA-4686) (Bicoloured deceiver).